Here is a 438-residue protein sequence, read N- to C-terminus: Methionine aminopeptidase 2 (438 aa).

The interval 1-89 is disordered; that stretch reads MAAQAAPAEE…LFPNKQYPKG (89 aa). The span at 10 to 20 shows a compositional bias: basic and acidic residues; sequence ELSKLSVEETK. Basic residues predominate over residues 51 to 65; it reads AKKKKKRKPRKKKKA. Residue histidine 191 coordinates substrate. A divalent metal cation-binding residues include aspartate 211, aspartate 222, and histidine 291. Histidine 299 serves as a coordination point for substrate. Positions 324 and 419 each coordinate a divalent metal cation.

This sequence belongs to the peptidase M24A family. Methionine aminopeptidase eukaryotic type 2 subfamily. Co(2+) is required as a cofactor. Zn(2+) serves as cofactor. The cofactor is Mn(2+). It depends on Fe(2+) as a cofactor.

The protein localises to the cytoplasm. It carries out the reaction Release of N-terminal amino acids, preferentially methionine, from peptides and arylamides.. Cotranslationally removes the N-terminal methionine from nascent proteins. The N-terminal methionine is often cleaved when the second residue in the primary sequence is small and uncharged (Met-Ala-, Cys, Gly, Pro, Ser, Thr, or Val). The protein is Methionine aminopeptidase 2 of Sordaria macrospora (strain ATCC MYA-333 / DSM 997 / K(L3346) / K-hell).